The following is a 212-amino-acid chain: KxDL motif-containing protein CG10681 (212 aa).

The disordered stretch occupies residues 128–159; it reads RSSLAEEAEDDTEAQAKKTAETPAPAAAKPVL. A compositionally biased stretch (low complexity) spans 148 to 157; sequence ETPAPAAAKP.

Belongs to the KXD1 family.

This chain is KxDL motif-containing protein CG10681, found in Drosophila melanogaster (Fruit fly).